The sequence spans 456 residues: Divalent metal cation transporter MntH (456 aa).

11 consecutive transmembrane segments (helical) span residues Ala-47–Trp-67, Phe-77–Ala-97, Ala-123–Ile-143, Leu-151–Val-171, Ala-184–Ala-204, Met-227–His-247, Ile-276–Phe-296, Pro-316–Leu-336, Phe-369–Glu-389, Ile-392–Phe-412, and Leu-422–Leu-442.

The protein belongs to the NRAMP family.

Its subcellular location is the cell inner membrane. Functionally, h(+)-stimulated, divalent metal cation uptake system. The sequence is that of Divalent metal cation transporter MntH from Brucella suis biovar 1 (strain 1330).